Here is a 123-residue protein sequence, read N- to C-terminus: MTVIYQTTITRIGASAIDALSDQMLITFREGAPADLEEYCFIHCHGELKGALHPGLQFSLGQHRYPVTAVGSVAEDNLRELGHVTLRFDGLNEAEFPGTVHVAGPVPDDIAPGSVLKFESVKE.

In terms of domain architecture, PTS EIIA type-5 spans 3–116; it reads VIYQTTITRI…PDDIAPGSVL (114 aa). His43 acts as the Tele-phosphohistidine intermediate in catalysis. His43 is modified (phosphohistidine; by HPr).

It localises to the cytoplasm. Functionally, the phosphoenolpyruvate-dependent sugar phosphotransferase system (sugar PTS), a major carbohydrate active transport system, catalyzes the phosphorylation of incoming sugar substrates concomitantly with their translocation across the cell membrane. The enzyme II complex composed of SrlA, SrlB and SrlE is involved in glucitol/sorbitol transport. It can also use D-mannitol. The sequence is that of PTS system glucitol/sorbitol-specific EIIA component (srlB) from Escherichia coli (strain K12).